Here is a 480-residue protein sequence, read N- to C-terminus: Siroheme synthase (480 aa).

The tract at residues 1–203 (MNYFPIFANL…QQTAQAEQEL (203 aa)) is precorrin-2 dehydrogenase /sirohydrochlorin ferrochelatase. Residues 22 to 23 (SV) and 43 to 44 (NQ) contribute to the NAD(+) site. Ser128 bears the Phosphoserine mark. Residues 214-480 (GFVSLVGAGP…GGLNAGQRAA (267 aa)) are uroporphyrinogen-III C-methyltransferase. Pro223 contributes to the S-adenosyl-L-methionine binding site. Asp246 functions as the Proton acceptor in the catalytic mechanism. Residue Lys268 is the Proton donor of the active site. S-adenosyl-L-methionine contacts are provided by residues 299–301 (GGD), Val304, 329–330 (TA), Met381, and Gly410.

The protein in the N-terminal section; belongs to the precorrin-2 dehydrogenase / sirohydrochlorin ferrochelatase family. This sequence in the C-terminal section; belongs to the precorrin methyltransferase family.

It carries out the reaction uroporphyrinogen III + 2 S-adenosyl-L-methionine = precorrin-2 + 2 S-adenosyl-L-homocysteine + H(+). It catalyses the reaction precorrin-2 + NAD(+) = sirohydrochlorin + NADH + 2 H(+). The catalysed reaction is siroheme + 2 H(+) = sirohydrochlorin + Fe(2+). It participates in cofactor biosynthesis; adenosylcobalamin biosynthesis; precorrin-2 from uroporphyrinogen III: step 1/1. It functions in the pathway cofactor biosynthesis; adenosylcobalamin biosynthesis; sirohydrochlorin from precorrin-2: step 1/1. Its pathway is porphyrin-containing compound metabolism; siroheme biosynthesis; precorrin-2 from uroporphyrinogen III: step 1/1. The protein operates within porphyrin-containing compound metabolism; siroheme biosynthesis; siroheme from sirohydrochlorin: step 1/1. It participates in porphyrin-containing compound metabolism; siroheme biosynthesis; sirohydrochlorin from precorrin-2: step 1/1. Functionally, multifunctional enzyme that catalyzes the SAM-dependent methylations of uroporphyrinogen III at position C-2 and C-7 to form precorrin-2 via precorrin-1. Then it catalyzes the NAD-dependent ring dehydrogenation of precorrin-2 to yield sirohydrochlorin. Finally, it catalyzes the ferrochelation of sirohydrochlorin to yield siroheme. The polypeptide is Siroheme synthase (Neisseria meningitidis serogroup C (strain 053442)).